Here is a 100-residue protein sequence, read N- to C-terminus: Large ribosomal subunit protein uL23 (100 aa).

This sequence belongs to the universal ribosomal protein uL23 family. As to quaternary structure, part of the 50S ribosomal subunit. Contacts protein L29, and trigger factor when it is bound to the ribosome.

Functionally, one of the early assembly proteins it binds 23S rRNA. One of the proteins that surrounds the polypeptide exit tunnel on the outside of the ribosome. Forms the main docking site for trigger factor binding to the ribosome. In Mycolicibacterium paratuberculosis (strain ATCC BAA-968 / K-10) (Mycobacterium paratuberculosis), this protein is Large ribosomal subunit protein uL23.